We begin with the raw amino-acid sequence, 101 residues long: Acylphosphatase-1 (101 aa).

The residue at position 2 (Ser-2) is an N-acetylserine. Ser-2 is subject to N-acetylalanine. One can recognise an Acylphosphatase-like domain in the interval 11-101 (SVDYEIFGKV…LDYTDFQIVK (91 aa)). Active-site residues include Arg-26 and Asn-44.

Belongs to the acylphosphatase family. As to expression, organ-common type isozyme is found in many different tissues.

The enzyme catalyses an acyl phosphate + H2O = a carboxylate + phosphate + H(+). The polypeptide is Acylphosphatase-1 (ACYP1) (Bos taurus (Bovine)).